The sequence spans 107 residues: Potassium voltage-gated channel subfamily E member 3 (107 aa).

N-linked (GlcNAc...) asparagine glycosylation is found at asparagine 5, asparagine 22, and asparagine 45. Positions 31–54 (CRPGPGPGSGTGPDNQTEDHRASL) are disordered. Residues 61–81 (SYMYILFVMFLFAVTVGSLIL) traverse the membrane as a helical segment. The interval 72–83 (FAVTVGSLILGY) is interaction with KCNQ1. At 82–103 (GYTRSRKVDKRSDPYHVYIKNR) the chain is on the cytoplasmic side.

Belongs to the potassium channel KCNE family. As to quaternary structure, interacts with KCNB1. Interacts with KCNC2. Associates with KCNC4/Kv3.4. Interacts with KCNQ1; associates with a KCNQ1:KCNE3 stoichiometry of 4:4; produces a current with nearly instantaneous activation with a linear current-voltage relationship and alters membrane raft localization; affects KCNQ1 structure and gating properties.

The protein localises to the cell membrane. The protein resides in the cytoplasm. It localises to the perikaryon. It is found in the cell projection. Its subcellular location is the dendrite. The protein localises to the membrane raft. Functionally, ancillary protein that functions as a regulatory subunit of the voltage-gated potassium (Kv) channel complex composed of pore-forming and potassium-conducting alpha subunits and of regulatory beta subunits. KCNE3 beta subunit modulates the gating kinetics and enhances stability of the channel complex. Alters the gating of the delayed rectifier Kv channel containing KCNB1 alpha subunit. Associates with KCNC4/Kv3.4 alpha subunit to form the subthreshold Kv channel in skeletal muscle and to establish the resting membrane potential (RMP) in muscle cells. Association with KCNQ1/KCLQT1 alpha subunit may form the intestinal cAMP-stimulated potassium channel involved in chloride secretion that produces a current with nearly instantaneous activation with a linear current-voltage relationship. In Rattus norvegicus (Rat), this protein is Potassium voltage-gated channel subfamily E member 3.